The sequence spans 689 residues: Glycine--tRNA ligase beta subunit (689 aa).

Belongs to the class-II aminoacyl-tRNA synthetase family. In terms of assembly, tetramer of two alpha and two beta subunits.

The protein resides in the cytoplasm. The enzyme catalyses tRNA(Gly) + glycine + ATP = glycyl-tRNA(Gly) + AMP + diphosphate. In Oenococcus oeni (strain ATCC BAA-331 / PSU-1), this protein is Glycine--tRNA ligase beta subunit.